Here is a 453-residue protein sequence, read N- to C-terminus: Ethanolamine ammonia-lyase large subunit (453 aa).

Substrate is bound by residues 160–162 and asparagine 193; that span reads RLQ. Adenosylcob(III)alamin contacts are provided by proline 194 and glutamine 246. Glutamate 287 serves as a coordination point for substrate. Residue serine 295 participates in adenosylcob(III)alamin binding. Aspartate 362 is a binding site for substrate. Adenosylcob(III)alamin is bound at residue methionine 401.

It belongs to the EutB family. In terms of assembly, the basic unit is a heterodimer which dimerizes to form tetramers. The heterotetramers trimerize; 6 large subunits form a core ring with 6 small subunits projecting outwards. Adenosylcob(III)alamin serves as cofactor.

The protein localises to the bacterial microcompartment. The catalysed reaction is ethanolamine = acetaldehyde + NH4(+). It functions in the pathway amine and polyamine degradation; ethanolamine degradation. Functionally, catalyzes the deamination of various vicinal amino-alcohols to oxo compounds. Allows this organism to utilize ethanolamine as the sole source of nitrogen and carbon in the presence of vitamin B12. This is Ethanolamine ammonia-lyase large subunit from Escherichia coli O157:H7.